The primary structure comprises 197 residues: dTTP/UTP pyrophosphatase (197 aa).

Asp-69 functions as the Proton acceptor in the catalytic mechanism.

The protein belongs to the Maf family. YhdE subfamily. Requires a divalent metal cation as cofactor.

It localises to the cytoplasm. It catalyses the reaction dTTP + H2O = dTMP + diphosphate + H(+). It carries out the reaction UTP + H2O = UMP + diphosphate + H(+). Its function is as follows. Nucleoside triphosphate pyrophosphatase that hydrolyzes dTTP and UTP. May have a dual role in cell division arrest and in preventing the incorporation of modified nucleotides into cellular nucleic acids. This chain is dTTP/UTP pyrophosphatase, found in Lachnoclostridium phytofermentans (strain ATCC 700394 / DSM 18823 / ISDg) (Clostridium phytofermentans).